Here is an 84-residue protein sequence, read N- to C-terminus: Large ribosomal subunit protein bL31B (84 aa).

The protein belongs to the bacterial ribosomal protein bL31 family. Type B subfamily. In terms of assembly, part of the 50S ribosomal subunit.

The chain is Large ribosomal subunit protein bL31B from Parabacteroides distasonis (strain ATCC 8503 / DSM 20701 / CIP 104284 / JCM 5825 / NCTC 11152).